A 356-amino-acid chain; its full sequence is Mitogen-activated protein kinase PMK11 (356 aa).

Residues 24–312 (YDIQDVVGEG…VEEALKHPYL (289 aa)) form the Protein kinase domain. Residues 30-38 (VGEGAYGVV) and Lys53 contribute to the ATP site.

The protein belongs to the protein kinase superfamily. CMGC Ser/Thr protein kinase family. MAP kinase subfamily. Mg(2+) serves as cofactor. Phosphorylated by MST7.

It carries out the reaction L-seryl-[protein] + ATP = O-phospho-L-seryl-[protein] + ADP + H(+). The enzyme catalyses L-threonyl-[protein] + ATP = O-phospho-L-threonyl-[protein] + ADP + H(+). In terms of biological role, mitogen-activated protein kinase; part of the MST11-MST7-PMK1 MAP kinase (MAPK) cascade that is essential for appressorium formation, penetration and invasive growth. Central regulator of appressorium development that acts downstream of the cAMP signal. The MST11-MST7-PMK1 MAP kinase cascade transduces signals from the cell surface sensors MDB2 and SHO1 that recognize various surface signals such as surface hydrophobicity, cutin monomers, and rice leaf waxes. Regulates expression of secreted fungal effector proteins implicated of host immune defenses, preventing reactive oxygen species generation and excessive callose deposition at plasmodesmata. Furthermore, controls the hyphal constriction required for fungal growth from one rice cell to the neighboring cell, enabling host tissue colonization and blast disease. Targets downstream of the PMK1-MAPK pathway include transcription factor MST12 and pathogenicity-related genes GAS1 and GAS2, both of which are expressed during appressorium formation, even if regulation of MST12 is not associated with expression of GAS1 or GAS2. In Pyricularia oryzae (strain 70-15 / ATCC MYA-4617 / FGSC 8958) (Rice blast fungus), this protein is Mitogen-activated protein kinase PMK11.